Consider the following 88-residue polypeptide: Enticin (88 aa).

The signal sequence occupies residues 1-19 (MKTALPLLLLTCLVAAVQS). Cystine bridges form between C25-C33, C40-C52, and C59-C67. The propeptide occupies 69–88 (REQSQLNHDHLNNHTTTQQP).

As to quaternary structure, binds to attractin and temptin.

The protein localises to the secreted. Its function is as follows. A component of the complex of water-borne protein pheromones that stimulates attraction and mating behavior. In Aplysia californica (California sea hare), this protein is Enticin.